Consider the following 541-residue polypeptide: Chaperonin GroEL 2 (541 aa).

Residues 30 to 33 (TLGP), Lys-51, 87 to 91 (DGTTT), Gly-414, and Asp-495 each bind ATP.

The protein belongs to the chaperonin (HSP60) family. In terms of assembly, forms a cylinder of 14 subunits composed of two heptameric rings stacked back-to-back. Interacts with the co-chaperonin GroES.

The protein localises to the cytoplasm. The enzyme catalyses ATP + H2O + a folded polypeptide = ADP + phosphate + an unfolded polypeptide.. Its function is as follows. Together with its co-chaperonin GroES, plays an essential role in assisting protein folding. The GroEL-GroES system forms a nano-cage that allows encapsulation of the non-native substrate proteins and provides a physical environment optimized to promote and accelerate protein folding. This chain is Chaperonin GroEL 2, found in Cereibacter sphaeroides (Rhodobacter sphaeroides).